Here is a 391-residue protein sequence, read N- to C-terminus: Isocitrate dehydrogenase [NADP] (391 aa).

Residues S102, N104, R108, R118, and R142 each contribute to the D-threo-isocitrate site. Mg(2+) is bound at residue D283.

Belongs to the isocitrate and isopropylmalate dehydrogenases family. As to quaternary structure, homodimer. Mg(2+) is required as a cofactor. It depends on Mn(2+) as a cofactor.

It catalyses the reaction D-threo-isocitrate + NADP(+) = 2-oxoglutarate + CO2 + NADPH. In terms of biological role, catalyzes the oxidative decarboxylation of isocitrate to 2-oxoglutarate and carbon dioxide with the concomitant reduction of NADP(+). The polypeptide is Isocitrate dehydrogenase [NADP] (icd) (Streptococcus salivarius).